Consider the following 359-residue polypeptide: MDPLGPAKPQWSWRCCLTTLLFQLLVAVCFFSYLRVSRDDPTVYPNGSHFPDSTGTPAHSIPLILLWTWPFNKPIALPRCSEMVPGTADCNITADRKVYPQADAVIVHHREVMYNPSAQLPRSPRRQGQRWIWFSMESPSNCRHLEALDGYFNLTMSYRSDSDIFTPYGWLQPWSGQPVHPPLNLSAKTELVAWAVSNWGPNSARVRYYQSLQAHLKVDVYGRSHKPLPQGTMMETLSRYKFYLAFENSLHPDYITEKLWRNALEAWAVPVVLGPSRSNYERFLPPDAFIHVDDFQSPKDLARYLQELDKDHARYLSYFRWRETLRPRFFSWALAFCKACWKLQEESRYQTRSIAAWFT.

At 1–14 (MDPLGPAKPQWSWR) the chain is on the cytoplasmic side. Residues 15-34 (CCLTTLLFQLLVAVCFFSYL) form a helical; Signal-anchor for type II membrane protein membrane-spanning segment. Topologically, residues 35–359 (RVSRDDPTVY…QTRSIAAWFT (325 aa)) are lumenal. Residues asparagine 46, asparagine 91, asparagine 153, and asparagine 184 are each glycosylated (N-linked (GlcNAc...) asparagine). Positions 73 to 112 (KPIALPRCSEMVPGTADCNITADRKVYPQADAVIVHHREV) are determines site-specific fucosylation.

Belongs to the glycosyltransferase 10 family. As to quaternary structure, homodimer and monomer. Monomer (secreted form). Post-translationally, N-glycosylated. In terms of processing, proteolytic cleavage releases a secreted glycoform of 43 kDa.

The protein localises to the golgi apparatus. It is found in the golgi stack membrane. Its subcellular location is the secreted. The enzyme catalyses a beta-D-galactosyl-(1-&gt;4)-N-acetyl-beta-D-glucosaminyl derivative + GDP-beta-L-fucose = a beta-D-galactosyl-(1-&gt;4)-[alpha-L-fucosyl-(1-&gt;3)]-N-acetyl-beta-D-glucosaminyl derivative + GDP + H(+). It catalyses the reaction an N-acetyl-alpha-neuraminyl-(2-&gt;3)-beta-D-galactosyl-(1-&gt;4)-N-acetyl-beta-D-glucosaminyl derivative + GDP-beta-L-fucose = an alpha-Neu5Ac-(2-&gt;3)-beta-D-Gal-(1-&gt;4)-[alpha-L-Fuc-(1-&gt;3)]-beta-D-GlcNAc derivative + GDP + H(+). The catalysed reaction is an alpha-Neu5Ac-(2-&gt;3)-beta-D-Gal-(1-&gt;4)-beta-D-GlcNAc-(1-&gt;3)-beta-D-Gal-(1-&gt;4)-[alpha-L-Fuc-(1-&gt;3)]-beta-D-GlcNAc derivative + GDP-beta-L-fucose = an alpha-Neu5Ac-(2-&gt;3)-beta-D-Gal-(1-&gt;4)-[alpha-L-Fuc-(1-&gt;3)]-beta-D-GlcNAc-(1-&gt;3)-beta-D-Gal-(1-&gt;4)-[alpha-L-Fuc-(1-&gt;3)]-beta-D-GlcNAc derivative + GDP + H(+). It carries out the reaction a neolactoside nLc6Cer + GDP-beta-L-fucose = beta-D-Gal-(1-&gt;4)-[alpha-L-Fuc-(1-&gt;3)]-beta-D-GlcNAc-(1-&gt;3)-beta-D-Gal-(1-&gt;4)-beta-D-GlcNAc-(1-&gt;3)-beta-D-Gal-(1-&gt;4)-beta-D-Glc-(1&lt;-&gt;1')-Cer + GDP + H(+). The enzyme catalyses a neolactoside nLc6Cer + GDP-beta-L-fucose = beta-D-galactosyl-(1-&gt;4)-N-acetyl-beta-D-glucosaminyl-(1-&gt;3)-beta-D-galactosyl-(1-&gt;4)-[alpha-L-fucosyl-(1-&gt;3)]-N-acetyl-beta-D-glucosaminyl-(1-&gt;3)-beta-D-galactosyl-(1-&gt;4)-beta-D-glucosyl-(1&lt;-&gt;1')-ceramide + GDP + H(+). It catalyses the reaction a neolactoside VI(3)-alpha-NeuNAc-nLc6Cer + GDP-beta-L-fucose = a neolactoside VI(3)-alpha-NeuAc,V(3)-alphaFuc-nLc6Cer + GDP + H(+). The catalysed reaction is beta-D-galactosyl-(1-&gt;4)-N-acetyl-D-glucosamine + GDP-beta-L-fucose = beta-D-galactosyl-(1-&gt;4)-[alpha-L-fucosyl-(1-&gt;3)]-N-acetyl-D-glucosamine + GDP + H(+). It carries out the reaction N-acetyl-alpha-neuraminosyl-(2-&gt;3)-beta-D-galactosyl-(1-&gt;4)-N-acetyl-beta-D-glucosamine + GDP-beta-L-fucose = N-acetyl-alpha-neuraminosyl-(2-&gt;3)-beta-D-galactosyl-(1-&gt;4)-[alpha-L-fucosyl-(1-&gt;3)]-N-acetyl-beta-D-glucosamine + GDP + H(+). The enzyme catalyses lactose + GDP-beta-L-fucose = beta-D-galactosyl-(1-&gt;4)-[alpha-L-fucosyl-(1-&gt;3)]-D-glucose + GDP + H(+). It catalyses the reaction alpha-L-Fuc-(1-&gt;2)-beta-D-Gal-(1-&gt;4)-D-Glc + GDP-beta-L-fucose = alpha-L-Fuc-(1-&gt;2)-beta-D-Gal-(1-&gt;4)-[alpha-L-Fuc-(1-&gt;3)]-D-Glc + GDP + H(+). The catalysed reaction is a beta-D-galactosyl-(1-&gt;4)-N-acetyl-beta-D-6-sulfooxy-glucosaminyl derivative + GDP-beta-L-fucose = a beta-D-galactosyl-(1-&gt;4)-[alpha-L-fucosyl-(1-&gt;3)]-N-acetyl-beta-D-6-sulfooxy-glucosaminyl derivative + GDP + H(+). Its pathway is protein modification; protein glycosylation. Functionally, catalyzes the transfer of L-fucose, from a guanosine diphosphate-beta-L-fucose, to the N-acetyl glucosamine (GlcNAc) of a distal alpha2,3 sialylated lactosamine unit of a glycoprotein- or glycolipid-linked sialopolylactosamines chain or of a distal or internal lactosamine unit of a neutral glycoprotein- or glycolipid-linked polylactosamines chain through an alpha-1,3 glycosidic linkage and participates in surface expression of the sialyl Lewis X (sLe(x)), Lewis X (Le(x)) and non sialylated VIM2 determinants. Moreover transfers fucose to H-type 2 (Fucalpha1-2Galbeta1-4GlcNAc) chain acceptor substrates and participates in difucosylated sialyl Lewis x determinants. Also fucosylates a polylactosamine substrate having a 6 sulfate modification at the GlcNAc moiety and gives rise to sialyl and non-sialyl 6-sulfo lewis X. Does not have activity towards type 1 ((Galbeta1-3GlcNAc)) and H-type 1 chain (Fucalpha1-2Galbeta1-3GlcNAc) acceptors substrates. This is 4-galactosyl-N-acetylglucosaminide 3-alpha-L-fucosyltransferase FUT6 from Pan troglodytes (Chimpanzee).